The following is a 295-amino-acid chain: Succinate dehydrogenase [ubiquinone] iron-sulfur subunit, mitochondrial (295 aa).

A 2Fe-2S ferredoxin-type domain is found at 67-144 (EKPRLQSYTL…DTKIYPLPHM (78 aa)). Residues Cys-106, Cys-111, Cys-114, and Cys-126 each contribute to the [2Fe-2S] cluster site. Residues 185 to 215 (ERRRLDGLYECILCACCSTSCPSYWWNQDEY) form the 4Fe-4S ferredoxin-type domain. [4Fe-4S] cluster is bound by residues Cys-195, Cys-198, and Cys-201. A [3Fe-4S] cluster-binding site is contributed by Cys-205. Trp-210 contacts a ubiquinone. Residues Cys-252 and Cys-258 each contribute to the [3Fe-4S] cluster site. Cys-262 contacts [4Fe-4S] cluster.

This sequence belongs to the succinate dehydrogenase/fumarate reductase iron-sulfur protein family. As to quaternary structure, component of complex II composed of four subunits: a flavoprotein (FP), an iron-sulfur protein (IP), and a cytochrome b composed of a large and a small subunit. [2Fe-2S] cluster is required as a cofactor. [3Fe-4S] cluster serves as cofactor. Requires [4Fe-4S] cluster as cofactor.

The protein localises to the mitochondrion inner membrane. The enzyme catalyses a quinone + succinate = fumarate + a quinol. It functions in the pathway carbohydrate metabolism; tricarboxylic acid cycle; fumarate from succinate (eukaryal route): step 1/1. Its function is as follows. Iron-sulfur protein (IP) subunit of succinate dehydrogenase (SDH) that is involved in complex II of the mitochondrial electron transport chain and is responsible for transferring electrons from succinate to ubiquinone (coenzyme Q). The chain is Succinate dehydrogenase [ubiquinone] iron-sulfur subunit, mitochondrial (SDH2) from Mycosarcoma maydis (Corn smut fungus).